The following is a 188-amino-acid chain: Myc target protein 1 (188 aa).

A helical membrane pass occupies residues 24–44 (FTVSVAIGLAIGGFLWALFVF). A Bipartite nuclear localization signal motif is present at residues 47–65 (RRRRASAPISQWSPTRRPR). Phosphoserine occurs at positions 87, 90, 93, and 101.

It belongs to the MYCT1 family. In terms of tissue distribution, highly expressed in lung, heart, and skeletal muscle. Expressed in brain, eye, liver, kidney, smooth muscle, pancreas, thyroid, thymus, submaxillary gland, spleen, testis, ovary, prostate, epididymis, and uterus. Deregulated expression promotes apoptosis in response to growth factor deprivation. Overexpression in synergy with CCNB1 may promote genomic instability.

The protein resides in the nucleus membrane. In terms of biological role, may regulate certain MYC target genes, MYC seems to be a direct upstream transcriptional activator. Does not seem to significantly affect growth cell capacity. Overexpression seems to mediate many of the known phenotypic features associated with MYC, including promotion of apoptosis, alteration of morphology, enhancement of anchorage-independent growth, tumorigenic conversion, promotion of genomic instability and inhibition of hematopoietic differentiation. The polypeptide is Myc target protein 1 (Myct1) (Mus musculus (Mouse)).